A 1102-amino-acid polypeptide reads, in one-letter code: MPVMKGLLAPQNTFLDTIATRFDGTHSNFILANAQVAKGFPIVYCSDGFCELAGFARTEVMQKSCSCKFLFGVETNEQLMLQIEKSLEEKVEFKGEIMFYKKNGAPFWCLLDIVPIKNEKGDVVLFLASFKDITDTKVKITSEDKKEDRTKGRSRAGSHFDSARRRSRAVLYHISGHLQRREKNKLKINNNVFVDKPAFPEYKASDAKKSKFILLHFSTFKAGWDWLILLATFYVAVTVPYNVCFIGNEDLSTTRSTTVSDIAVEILFIIDIILNFRTTYVSKSGQVIFEARSICIHYVTTWFIIDLIAALPFDLLYAFNVTVVSLVHLLKTVRLLRLLRLLQKLDRYSQHSTIVLTLLMSMFALLAHWMACIWYVIGKMEREDNSLLKWEVGWLHELGKRLESPYYGNNTLGGPSIRSAYIAALYFTLSSLTSVGFGNVSANTDAEKIFSICTMLIGALMHALVFGNVTAIIQRMYSRWSLYHTRTKDLKDFIRVHHLPQQLKQRMLEYFQTTWSVNNGIDSNELLKDFPDELRSDITMHLNKEILQLSLFECASRGCLRSLSLHIKTSFCAPGEYLLRQGDALQAIYFVCSGSMEVLKDSMVLAILGKGDLIGANLSIKDQVIKTNADVKALTYCDLQCIILKGLFEVLGLYPEYAHKFVEDIQHDLTYNLREGHESDVISRLSNKSTVSQAEPKGNGSINKRLPSIVEDEEEEEVEEEETTSLSPIYTRGSSVSHSKKTGSNKTYLGLSLKQLASGTVPFHSPIRVSSANSPKTKQEADPPNHGRKKEKNLKVQLSSLGSAGTPELSPRIVDGIEDGNSNEETQTFDFGSEQIRPEPRISPPLAESEIGAAFLFIKAEETKQQINKLNSEVTTLTQEVSQLGRDMRSIMQLLENILSPQQPSQFCSLHPTPMCPSRESLQTRVSWSAHQPCLHLQAGGAHLYHGNVASGIWSVDPSLVGSSPQRTEAHEQNPADSELHHSPNLDYSPSHCQVIQEGHLQFLRCISPHSDTTLTPLQSISATLSSSVCSSSETSLHLVLPSRSEEGSITHGPVSSFSLENLPGSWDREQMMSASSERLENFPVEVVTSTADVKDSKAINV.

At 1–225 (MPVMKGLLAP…HFSTFKAGWD (225 aa)) the chain is on the cytoplasmic side. The PAS domain maps to 18 to 90 (IATRFDGTHS…LQIEKSLEEK (73 aa)). The region spanning 93 to 145 (FKGEIMFYKKNGAPFWCLLDIVPIKNEKGDVVLFLASFKDITDTKVKITSEDK) is the PAC domain. Residues 142–151 (SEDKKEDRTK) are compositionally biased toward basic and acidic residues. The segment at 142 to 162 (SEDKKEDRTKGRSRAGSHFDS) is disordered. A helical membrane pass occupies residues 226–246 (WLILLATFYVAVTVPYNVCFI). Topologically, residues 247 to 255 (GNEDLSTTR) are extracellular. The chain crosses the membrane as a helical span at residues 256–276 (STTVSDIAVEILFIIDIILNF). Residues 277–298 (RTTYVSKSGQVIFEARSICIHY) lie on the Cytoplasmic side of the membrane. Residues 299–319 (VTTWFIIDLIAALPFDLLYAF) traverse the membrane as a helical segment. An N-linked (GlcNAc...) asparagine glycan is attached at N320. Residues 320–327 (NVTVVSLV) lie on the Extracellular side of the membrane. Residues 328–348 (HLLKTVRLLRLLRLLQKLDRY) form a helical; Voltage-sensor membrane-spanning segment. Over 349-357 (SQHSTIVLT) the chain is Cytoplasmic. A helical membrane pass occupies residues 358–378 (LLMSMFALLAHWMACIWYVIG). The Extracellular segment spans residues 379–419 (KMEREDNSLLKWEVGWLHELGKRLESPYYGNNTLGGPSIRS). N409 carries N-linked (GlcNAc...) asparagine glycosylation. The segment at residues 420-440 (AYIAALYFTLSSLTSVGFGNV) is an intramembrane region (pore-forming). The Selectivity filter signature appears at 434 to 439 (SVGFGN). Residues 441–448 (SANTDAEK) lie on the Extracellular side of the membrane. Residues 449–469 (IFSICTMLIGALMHALVFGNV) traverse the membrane as a helical segment. Residues 470-1102 (TAIIQRMYSR…DVKDSKAINV (633 aa)) are Cytoplasmic-facing. The segment at 551–668 (LFECASRGCL…HKFVEDIQHD (118 aa)) is cNMP-binding domain. Residues 684 to 693 (RLSNKSTVSQ) show a composition bias toward polar residues. 3 disordered regions span residues 684 to 743 (RLSN…KKTG), 764 to 841 (HSPI…PEPR), and 960 to 991 (LVGS…YSPS). Residues 710 to 723 (VEDEEEEEVEEEET) show a composition bias toward acidic residues. The segment covering 724–737 (TSLSPIYTRGSSVS) has biased composition (polar residues). Residues 968–984 (TEAHEQNPADSELHHSP) show a composition bias toward basic and acidic residues.

This sequence belongs to the potassium channel family. H (Eag) (TC 1.A.1.20) subfamily. Kv12.1/KCNH8 sub-subfamily. As to quaternary structure, the potassium channel is probably composed of a homo- or heterotetrameric complex of pore-forming alpha subunits that can associate with modulating beta subunits.

The protein localises to the membrane. The catalysed reaction is K(+)(in) = K(+)(out). Pore-forming (alpha) subunit of a voltage-gated delayed rectifier potassium channel that mediates outward-rectifying potassium currents. Elicits a slowly activating, non-inactivating and slowly deactivation outwards potassium current at depolarizating voltages from -30 mV to +50mV. Shows no obvious change in the activation rate from different holding potentials. Activation is strongly dependent on the pH of the external solution. The protein is Voltage-gated delayed rectifier potassium channel KCNH8 of Mus musculus (Mouse).